Consider the following 154-residue polypeptide: MSLATLDATQHPNLPASAATLFKAKAQKKLSFEQIAQHIGRNEVATAALFYGQAKASPEDIQKLSELLNISPQVLEEQLSGFPDRGRSVEMPPKEPLIYRLYEIVQNYGYAYKAVLNEKFGDGIMSAISFSTKVEKETDADGNNWAVITLRGKW.

Active-site residues include arginine 100, glutamate 103, and serine 126.

Belongs to the cyanase family.

The catalysed reaction is cyanate + hydrogencarbonate + 3 H(+) = NH4(+) + 2 CO2. In terms of biological role, catalyzes the reaction of cyanate with bicarbonate to produce ammonia and carbon dioxide. This is Cyanate hydratase from Aspergillus fumigatus (strain CBS 144.89 / FGSC A1163 / CEA10) (Neosartorya fumigata).